A 352-amino-acid polypeptide reads, in one-letter code: Chorismate synthase (352 aa).

Arg-48 contributes to the NADP(+) binding site. Residues 125–127, 238–239, Gly-278, 293–297, and Arg-319 contribute to the FMN site; these read RSS, NA, and KPTSS.

The protein belongs to the chorismate synthase family. In terms of assembly, homotetramer. Requires FMNH2 as cofactor.

The catalysed reaction is 5-O-(1-carboxyvinyl)-3-phosphoshikimate = chorismate + phosphate. The protein operates within metabolic intermediate biosynthesis; chorismate biosynthesis; chorismate from D-erythrose 4-phosphate and phosphoenolpyruvate: step 7/7. In terms of biological role, catalyzes the anti-1,4-elimination of the C-3 phosphate and the C-6 proR hydrogen from 5-enolpyruvylshikimate-3-phosphate (EPSP) to yield chorismate, which is the branch point compound that serves as the starting substrate for the three terminal pathways of aromatic amino acid biosynthesis. This reaction introduces a second double bond into the aromatic ring system. This Legionella pneumophila (strain Paris) protein is Chorismate synthase.